The sequence spans 548 residues: Tryprostatin B 6-hydroxylase (548 aa).

The next 3 helical transmembrane spans lie at 5–25 (MKCGYLATAGLIGICIHLWYF), 35–54 (WRYVRFHLCLTMGVSALLYA), and 73–93 (LLMVTYLIGLFTSLLLYRTLF). Cys491 is a binding site for heme.

Belongs to the cytochrome P450 family. The cofactor is heme.

It localises to the membrane. The catalysed reaction is tryprostatin B + reduced [NADPH--hemoprotein reductase] + O2 = 6-hydroxytryprostatin B + oxidized [NADPH--hemoprotein reductase] + H2O + H(+). It functions in the pathway mycotoxin biosynthesis. Functionally, cytochrome P450 monooxygenase; part of the gene cluster that mediates the biosynthesis of fumitremorgins, indole alkaloids that carry not only intriguing chemical structures, but also interesting biological and pharmacological activities. The biosynthesis of fumitremorgin-type alkaloids begins by condensation of the two amino acids L-tryptophan and L-proline to brevianamide F, catalyzed by the non-ribosomal peptide synthetase ftmPS/ftmA. Brevianamide F is then prenylated by the prenyltransferase ftmPT1/ftmB in the presence of dimethylallyl diphosphate, resulting in the formation of tryprostatin B. The three cytochrome P450 monooxygenases, ftmP450-1/ftmC, ftmP450-2/ftmE and ftmP450-3/FtmG, are responsible for the conversion of tryprostatin B to 6-hydroxytryprostatin B, tryprostatin A to fumitremorgin C and fumitremorgin C to 12,13-dihydroxyfumitremorgin C, respectively. The putative methyltransferase ftmMT/ftmD is expected for the conversion of 6-hydroxytryprostatin B to tryprostatin A. FtmPT2/FtmH catalyzes the prenylation of 12,13-dihydroxyfumitre-morgin C in the presence of dimethylallyl diphosphate, resulting in the formation of fumitremorgin B. Fumitremorgin B is further converted to verruculogen by ftmOx1/ftmF via the insertion of an endoperoxide bond between the two prenyl moieties. Finally, verruculogen is further converted to fumitremorgin A by the verruculogen prenyltransferase ftmPT3. The sequence is that of Tryprostatin B 6-hydroxylase from Neosartorya fischeri (strain ATCC 1020 / DSM 3700 / CBS 544.65 / FGSC A1164 / JCM 1740 / NRRL 181 / WB 181) (Aspergillus fischerianus).